The chain runs to 475 residues: CAAX prenyl protease 1 homolog (475 aa).

Topologically, residues 1–18 are lumenal; the sequence is MGMWASLDALWEMPAEKR. A helical transmembrane segment spans residues 19 to 39; that stretch reads IFGAVLLFSWTVYLWETFLAQ. Over 40–81 the chain is Nuclear; sequence RQRRIYKTTTHVPPELGQIMDSETFEKSRLYQLDKSTFSFWS. The chain crosses the membrane as a helical span at residues 82–102; the sequence is GLYSETEGTLILLFGGIPYLW. Residues 103–123 lie on the Lumenal side of the membrane; that stretch reads RLSGRFCGYAGFGPEYEITQS. Residues 124 to 144 traverse the membrane as a helical segment; sequence LVFLLLATLFSALTGLPWSLY. Topologically, residues 145–170 are nuclear; it reads NTFVIEEKHGFNQQTLGFFMKDAIKK. Residues 171–191 traverse the membrane as a helical segment; that stretch reads FVVTQCILLPVSSLLLYIIKI. Residues 192–195 lie on the Lumenal side of the membrane; the sequence is GGDY. Residues 196-216 traverse the membrane as a helical segment; the sequence is FFIYAWLFTLVVSLVLVTIYA. The Nuclear segment spans residues 217-347; that stretch reads DYIAPLFDKF…GHWKLGHTVK (131 aa). Residue histidine 335 participates in Zn(2+) binding. Glutamate 336 is an active-site residue. Residue histidine 339 coordinates Zn(2+). Residues 348–368 form a helical membrane-spanning segment; the sequence is NIIISQMNSFLCFFLFAVLIG. The Lumenal segment spans residues 369–382; sequence RKELFAAFGFYDSQ. A helical transmembrane segment spans residues 383–405; sequence PTLIGLLIIFQFIFSPYNEVLSF. Over 406 to 475 the chain is Nuclear; it reads CLTVLSRRFE…LQALKTMKQH (70 aa). Position 415 (glutamate 415) interacts with Zn(2+).

The protein belongs to the peptidase M48A family. Zn(2+) is required as a cofactor. In terms of tissue distribution, widely expressed. High levels in kidney, prostate, testis and ovary.

The protein resides in the endoplasmic reticulum membrane. The protein localises to the nucleus inner membrane. It localises to the early endosome membrane. It is found in the late endosome membrane. It catalyses the reaction Hydrolyzes the peptide bond -P2-(S-farnesyl or geranylgeranyl)C-P1'-P2'-P3'-COOH where P1' and P2' are amino acids with aliphatic side chains and P3' is any C-terminal residue.. Transmembrane metalloprotease whose catalytic activity is critical for processing lamin A/LMNA on the inner nuclear membrane and clearing clogged translocons on the endoplasmic reticulum. Proteolytically removes the C-terminal three residues of farnesylated proteins. Also plays an antiviral role independently of its protease activity by restricting enveloped RNA and DNA viruses, including influenza A, Zika, Ebola, Sindbis, vesicular stomatitis, cowpox, and vaccinia. Mechanistically, controls IFITM antiviral pathway to hinder viruses from breaching the endosomal barrier by modulating membrane fluidity. This Homo sapiens (Human) protein is CAAX prenyl protease 1 homolog.